A 578-amino-acid chain; its full sequence is 2-succinyl-5-enolpyruvyl-6-hydroxy-3-cyclohexene-1-carboxylate synthase (578 aa).

The disordered stretch occupies residues 186–208; sequence LPAAGGEHHPAEPRSTPWDGPVP.

It belongs to the TPP enzyme family. MenD subfamily. In terms of assembly, homodimer. Requires Mg(2+) as cofactor. The cofactor is Mn(2+). Thiamine diphosphate serves as cofactor.

It carries out the reaction isochorismate + 2-oxoglutarate + H(+) = 5-enolpyruvoyl-6-hydroxy-2-succinyl-cyclohex-3-ene-1-carboxylate + CO2. Its pathway is quinol/quinone metabolism; 1,4-dihydroxy-2-naphthoate biosynthesis; 1,4-dihydroxy-2-naphthoate from chorismate: step 2/7. It functions in the pathway cofactor biosynthesis; phylloquinone biosynthesis. In terms of biological role, catalyzes the thiamine diphosphate-dependent decarboxylation of 2-oxoglutarate and the subsequent addition of the resulting succinic semialdehyde-thiamine pyrophosphate anion to isochorismate to yield 2-succinyl-5-enolpyruvyl-6-hydroxy-3-cyclohexene-1-carboxylate (SEPHCHC). In Synechococcus sp. (strain WH7803), this protein is 2-succinyl-5-enolpyruvyl-6-hydroxy-3-cyclohexene-1-carboxylate synthase.